The sequence spans 132 residues: Protein FAM174C (132 aa).

The first 26 residues, 1–26 (MGPRVLQPPLLLLLLALLLAALPCGA), serve as a signal peptide directing secretion. A disordered region spans residues 34–66 (PAQVTLSPPPAVTNGSQPGAPHNSTHTRPPGAS). A compositionally biased stretch (polar residues) spans 46 to 60 (TNGSQPGAPHNSTHT). Residue N47 is glycosylated (N-linked (GlcNAc...) asparagine). A helical transmembrane segment spans residues 73-93 (SFYVILGFCGLTALYFLIRAF). T113 is modified (phosphothreonine). The disordered stretch occupies residues 113-132 (TEMASLDSDEETVFESRNLR). Phosphoserine is present on residues S117 and S120.

This sequence belongs to the FAM174 family.

It localises to the membrane. This is Protein FAM174C from Homo sapiens (Human).